The chain runs to 591 residues: Aspartate--tRNA(Asp/Asn) ligase (591 aa).

L-aspartate is bound at residue Glu174. The interval 198–201 (QLFK) is aspartate. Arg220 is an L-aspartate binding site. ATP is bound by residues 220–222 (RDE) and Gln229. His450 lines the L-aspartate pocket. Glu483 contacts ATP. Residue Arg490 coordinates L-aspartate. 535–538 (GLDR) lines the ATP pocket.

Belongs to the class-II aminoacyl-tRNA synthetase family. Type 1 subfamily. As to quaternary structure, homodimer.

Its subcellular location is the cytoplasm. It carries out the reaction tRNA(Asx) + L-aspartate + ATP = L-aspartyl-tRNA(Asx) + AMP + diphosphate. Functionally, aspartyl-tRNA synthetase with relaxed tRNA specificity since it is able to aspartylate not only its cognate tRNA(Asp) but also tRNA(Asn). Reaction proceeds in two steps: L-aspartate is first activated by ATP to form Asp-AMP and then transferred to the acceptor end of tRNA(Asp/Asn). The polypeptide is Aspartate--tRNA(Asp/Asn) ligase (Pseudomonas syringae pv. tomato (strain ATCC BAA-871 / DC3000)).